The primary structure comprises 218 residues: Methylthioribulose-1-phosphate dehydratase (218 aa).

Positions 107 and 109 each coordinate Zn(2+).

This sequence belongs to the aldolase class II family. MtnB subfamily. It depends on Zn(2+) as a cofactor.

It catalyses the reaction 5-(methylsulfanyl)-D-ribulose 1-phosphate = 5-methylsulfanyl-2,3-dioxopentyl phosphate + H2O. The protein operates within amino-acid biosynthesis; L-methionine biosynthesis via salvage pathway; L-methionine from S-methyl-5-thio-alpha-D-ribose 1-phosphate: step 2/6. Catalyzes the dehydration of methylthioribulose-1-phosphate (MTRu-1-P) into 2,3-diketo-5-methylthiopentyl-1-phosphate (DK-MTP-1-P). This is Methylthioribulose-1-phosphate dehydratase from Xylella fastidiosa (strain Temecula1 / ATCC 700964).